We begin with the raw amino-acid sequence, 111 residues long: UPF0375 protein ule-4 (111 aa).

A signal peptide spans 1-18; sequence MNSRLVLLLAVSVALVSA. 2 N-linked (GlcNAc...) asparagine glycosylation sites follow: Asn23 and Asn58.

Belongs to the UPF0375 family.

The protein resides in the secreted. This chain is UPF0375 protein ule-4, found in Caenorhabditis elegans.